The following is a 254-amino-acid chain: Alcohol dehydrogenase (254 aa).

Residue 10-33 (FVAGLGGIGLDTSREIVKSGPKNL) coordinates NAD(+). Position 138 (serine 138) interacts with substrate. The active-site Proton acceptor is tyrosine 151.

It belongs to the short-chain dehydrogenases/reductases (SDR) family. Homodimer.

It carries out the reaction a primary alcohol + NAD(+) = an aldehyde + NADH + H(+). The catalysed reaction is a secondary alcohol + NAD(+) = a ketone + NADH + H(+). This is Alcohol dehydrogenase (Adh) from Drosophila borealis (Fruit fly).